Reading from the N-terminus, the 442-residue chain is Histidine--tRNA ligase (442 aa).

Belongs to the class-II aminoacyl-tRNA synthetase family. Homodimer.

It is found in the cytoplasm. It carries out the reaction tRNA(His) + L-histidine + ATP = L-histidyl-tRNA(His) + AMP + diphosphate + H(+). The chain is Histidine--tRNA ligase from Helicobacter pylori (strain G27).